Here is a 309-residue protein sequence, read N- to C-terminus: Probable nitrogen assimilation transcriptional activator (309 aa).

Residues 1-57 (MRLEQLQAALRVAETGSFQEAAQKVGCNQSTISRQVKGLEDELGIALFRRQGRMKLT) enclose the HTH lysR-type domain. Residues 18 to 37 (FQEAAQKVGCNQSTISRQVK) constitute a DNA-binding region (H-T-H motif).

The protein belongs to the LysR transcriptional regulatory family.

Its function is as follows. Seems to regulate utilization of fixed nitrogen by controlling the expression of a certain gene(s) involved in nitrogen metabolism. This Synechococcus elongatus (strain ATCC 33912 / PCC 7942 / FACHB-805) (Anacystis nidulans R2) protein is Probable nitrogen assimilation transcriptional activator (ntcB).